The chain runs to 602 residues: 3-hydroxy-3-methylglutaryl-coenzyme A reductase 2 (602 aa).

Transmembrane regions (helical) follow at residues 44–67 (ASDALPLPLYLTTNGLFFTMFFSV) and 95–115 (AIVSLIASVIYLLGFFGIGFV). A linker region spans residues 116–187 (QTFVSRGNND…PLITSASSGE (72 aa)). N-linked (GlcNAc...) asparagine glycosylation occurs at Asn-124. Residues 188-602 (DEEIIKSVVQ…STKDVTKASS (415 aa)) are catalytic. Glu-281 serves as the catalytic Charge relay system. Asn-345 carries an N-linked (GlcNAc...) asparagine glycan. Lys-413 acts as the Charge relay system in catalysis. Residue Asn-458 is glycosylated (N-linked (GlcNAc...) asparagine). The Charge relay system role is filled by Asp-489. His-587 functions as the Proton donor in the catalytic mechanism. N-linked (GlcNAc...) asparagine glycosylation is present at Asn-591.

Belongs to the HMG-CoA reductase family.

The protein localises to the endoplasmic reticulum membrane. It carries out the reaction (R)-mevalonate + 2 NADP(+) + CoA = (3S)-3-hydroxy-3-methylglutaryl-CoA + 2 NADPH + 2 H(+). It functions in the pathway metabolic intermediate biosynthesis; (R)-mevalonate biosynthesis; (R)-mevalonate from acetyl-CoA: step 3/3. Functionally, catalyzes the synthesis of mevalonate. The specific precursor of all isoprenoid compounds present in plants. The polypeptide is 3-hydroxy-3-methylglutaryl-coenzyme A reductase 2 (HMG2) (Solanum lycopersicum (Tomato)).